The primary structure comprises 104 residues: Large ribosomal subunit protein bL21 (104 aa).

Belongs to the bacterial ribosomal protein bL21 family. Part of the 50S ribosomal subunit. Contacts protein L20.

This protein binds to 23S rRNA in the presence of protein L20. This Streptococcus thermophilus (strain ATCC BAA-491 / LMD-9) protein is Large ribosomal subunit protein bL21.